Here is a 311-residue protein sequence, read N- to C-terminus: Coproporphyrin III ferrochelatase 1 (311 aa).

Fe-coproporphyrin III is bound by residues Tyr12, Arg29, 45 to 46 (RY), Ser53, and Tyr124. Fe(2+)-binding residues include His182 and Glu263.

The protein belongs to the ferrochelatase family.

It is found in the cytoplasm. It catalyses the reaction Fe-coproporphyrin III + 2 H(+) = coproporphyrin III + Fe(2+). Its pathway is porphyrin-containing compound metabolism; protoheme biosynthesis. Its function is as follows. Involved in coproporphyrin-dependent heme b biosynthesis. Catalyzes the insertion of ferrous iron into coproporphyrin III to form Fe-coproporphyrin III. The chain is Coproporphyrin III ferrochelatase 1 from Bacillus cereus (strain ATCC 14579 / DSM 31 / CCUG 7414 / JCM 2152 / NBRC 15305 / NCIMB 9373 / NCTC 2599 / NRRL B-3711).